The sequence spans 355 residues: Plasmodial-specific protein LAV1-2 (355 aa).

2 EF-hand domains span residues 151–186 (EDTNILRQLFLSSAVSGSGKFSFQDLKQVLAKYADT) and 217–252 (NDLAALVADFRKIDTNSNGTLSRKEFREHFVRLGFD). The Ca(2+) site is built by Asp230, Asn232, Asn234, Thr236, Glu241, Asp265, Asp267, Ser269, Asp271, Glu276, Asp295, Asp297, Ser299, Gln301, Glu306, Asp332, Asp334, Ser336, Ser338, and Glu343. 2 EF-hand domains span residues 282-317 (LCLLVLRILYAFADFDKSGQLSKEEVQKVLEDAHIP) and 319-354 (SARKKFEHQFSVVDVDDSKSLSYQEFVMLVLLMFHD).

The sequence is that of Plasmodial-specific protein LAV1-2 from Physarum polycephalum (Slime mold).